The following is a 94-amino-acid chain: Myosuppressin (94 aa).

The N-terminal stretch at 1–24 (MMSPTLMILISITTMAILSGESFG) is a signal peptide. The propeptide occupies 25-80 (AMPAQCNSEFLEELPPRLRKICVAIARIWDAREMNDFVDDREYRENLPRYDSSVKR). Gln81 is modified (pyrrolidone carboxylic acid). Residue Phe90 is modified to Phenylalanine amide.

Expressed throughout the nervous system (at protein level).

The protein resides in the secreted. Its function is as follows. Myoinhibiting neuropeptide. In Camponotus floridanus (Florida carpenter ant), this protein is Myosuppressin.